A 185-amino-acid polypeptide reads, in one-letter code: Elongation factor P (185 aa).

This sequence belongs to the elongation factor P family.

It is found in the cytoplasm. It participates in protein biosynthesis; polypeptide chain elongation. Involved in peptide bond synthesis. Stimulates efficient translation and peptide-bond synthesis on native or reconstituted 70S ribosomes in vitro. Probably functions indirectly by altering the affinity of the ribosome for aminoacyl-tRNA, thus increasing their reactivity as acceptors for peptidyl transferase. The sequence is that of Elongation factor P from Staphylococcus carnosus (strain TM300).